A 176-amino-acid chain; its full sequence is Large ribosomal subunit protein uL6 (176 aa).

Residues 153–170 are compositionally biased toward basic and acidic residues; that stretch reads PEPYKGKGIRYGDEEVRR. A disordered region spans residues 153–176; sequence PEPYKGKGIRYGDEEVRRKEAKKK.

It belongs to the universal ribosomal protein uL6 family. Part of the 50S ribosomal subunit.

Its function is as follows. This protein binds to the 23S rRNA, and is important in its secondary structure. It is located near the subunit interface in the base of the L7/L12 stalk, and near the tRNA binding site of the peptidyltransferase center. The chain is Large ribosomal subunit protein uL6 from Chromohalobacter salexigens (strain ATCC BAA-138 / DSM 3043 / CIP 106854 / NCIMB 13768 / 1H11).